Here is an 857-residue protein sequence, read N- to C-terminus: DNA mismatch repair protein MutS (857 aa).

Position 608–615 (608–615) interacts with ATP; that stretch reads GPNMSGKS.

This sequence belongs to the DNA mismatch repair MutS family.

Its function is as follows. This protein is involved in the repair of mismatches in DNA. It is possible that it carries out the mismatch recognition step. This protein has a weak ATPase activity. This is DNA mismatch repair protein MutS from Lacticaseibacillus paracasei (strain ATCC 334 / BCRC 17002 / CCUG 31169 / CIP 107868 / KCTC 3260 / NRRL B-441) (Lactobacillus paracasei).